The following is a 78-amino-acid chain: Magnetosome protein MamL (78 aa).

An N-terminal signal peptide occupies residues Met-1–Ala-22. Residues His-23 to His-38 lie on the Lumenal side of the membrane. The helical transmembrane segment at Phe-39–Ala-59 threads the bilayer. At Asn-60 to Arg-78 the chain is on the cytoplasmic side.

It belongs to the magnetosome MamL family.

It localises to the magnetosome membrane. Functionally, involved in magnetite crystal maturation, but not in magnetosome vesicle tubulation or formation. One of 7 genes (mamLQBIEMO) able to induce magnetosome membrane biogenesis; coexpression of mamLQRBIEMO in a deletion of the 17 gene mamAB operon restores magnetosome vesicle formation but not magnetite biosynthesis. This chain is Magnetosome protein MamL, found in Magnetospirillum gryphiswaldense (strain DSM 6361 / JCM 21280 / NBRC 15271 / MSR-1).